Consider the following 245-residue polypeptide: Biosynthetic peptidoglycan transglycosylase (245 aa).

The chain crosses the membrane as a helical span at residues 24 to 44; that stretch reads LVVIGAWLAGILLFSFLPVPF.

It belongs to the glycosyltransferase 51 family.

Its subcellular location is the cell inner membrane. The enzyme catalyses [GlcNAc-(1-&gt;4)-Mur2Ac(oyl-L-Ala-gamma-D-Glu-L-Lys-D-Ala-D-Ala)](n)-di-trans,octa-cis-undecaprenyl diphosphate + beta-D-GlcNAc-(1-&gt;4)-Mur2Ac(oyl-L-Ala-gamma-D-Glu-L-Lys-D-Ala-D-Ala)-di-trans,octa-cis-undecaprenyl diphosphate = [GlcNAc-(1-&gt;4)-Mur2Ac(oyl-L-Ala-gamma-D-Glu-L-Lys-D-Ala-D-Ala)](n+1)-di-trans,octa-cis-undecaprenyl diphosphate + di-trans,octa-cis-undecaprenyl diphosphate + H(+). Its pathway is cell wall biogenesis; peptidoglycan biosynthesis. Peptidoglycan polymerase that catalyzes glycan chain elongation from lipid-linked precursors. The polypeptide is Biosynthetic peptidoglycan transglycosylase (Pectobacterium atrosepticum (strain SCRI 1043 / ATCC BAA-672) (Erwinia carotovora subsp. atroseptica)).